The sequence spans 241 residues: Probable transcriptional regulatory protein SAR11_0592 (241 aa).

A disordered region spans residues 1 to 24; the sequence is MSGHSKWASIKHSKGKADKQRSKV.

The protein belongs to the TACO1 family.

The protein localises to the cytoplasm. In Pelagibacter ubique (strain HTCC1062), this protein is Probable transcriptional regulatory protein SAR11_0592.